A 286-amino-acid chain; its full sequence is uncharacterized protein (286 aa).

Disordered regions lie at residues 59–89 and 225–286; these read PESA…PGAK and RQRK…EDTR. A compositionally biased stretch (low complexity) spans 69 to 85; it reads AEAESAGTAAATESHGA.

This is an uncharacterized protein from Mus musculus (Mouse).